Here is a 378-residue protein sequence, read N- to C-terminus: Beta sliding clamp (378 aa).

The protein belongs to the beta sliding clamp family. Forms a ring-shaped head-to-tail homodimer around DNA which binds and tethers DNA polymerases and other proteins to the DNA. The DNA replisome complex has a single clamp-loading complex (3 tau and 1 each of delta, delta', psi and chi subunits) which binds 3 Pol III cores (1 core on the leading strand and 2 on the lagging strand) each with a beta sliding clamp dimer. Additional proteins in the replisome are other copies of gamma, psi and chi, Ssb, DNA helicase and RNA primase. Interacts with YabA, and via YabA, with DnaA. During sporulation probably interacts with SirA.

Its subcellular location is the cytoplasm. The protein localises to the nucleoid. Its function is as follows. Confers DNA tethering and processivity to DNA polymerases and other proteins. Acts as a clamp, forming a ring around DNA (a reaction catalyzed by the clamp-loading complex) which diffuses in an ATP-independent manner freely and bidirectionally along dsDNA. Initially characterized for its ability to contact the catalytic subunit of DNA polymerase III (Pol III), a complex, multichain enzyme responsible for most of the replicative synthesis in bacteria; Pol III exhibits 3'-5' exonuclease proofreading activity. The beta chain is required for initiation of replication as well as for processivity of DNA replication. Overexpression in vivo stimulates inititation of DNA replication from oriC. Increased levels of DnaN remove YabA from its association with DnaA on the chromosome, allowing DnaA to bind to its targets. Its interaction with DnaA probably serves as a sink to prevent excessive replication initiation. The sequence is that of Beta sliding clamp from Bacillus subtilis (strain 168).